A 185-amino-acid chain; its full sequence is Ribosome-recycling factor (185 aa).

Belongs to the RRF family.

Its subcellular location is the cytoplasm. Responsible for the release of ribosomes from messenger RNA at the termination of protein biosynthesis. May increase the efficiency of translation by recycling ribosomes from one round of translation to another. The polypeptide is Ribosome-recycling factor (Geobacillus kaustophilus (strain HTA426)).